An 88-amino-acid polypeptide reads, in one-letter code: Large ribosomal subunit protein bL31B (88 aa).

The protein belongs to the bacterial ribosomal protein bL31 family. Type B subfamily. As to quaternary structure, part of the 50S ribosomal subunit.

This Paraburkholderia phytofirmans (strain DSM 17436 / LMG 22146 / PsJN) (Burkholderia phytofirmans) protein is Large ribosomal subunit protein bL31B.